Reading from the N-terminus, the 98-residue chain is Post-transcriptional regulator ComN (98 aa).

In terms of assembly, interacts directly with DivIVA.

It localises to the cytoplasm. Its function is as follows. Required for post-transcription initiation control of the comE operon. Promotes the accumulation of its target comE mRNA to septal and polar sites. The protein is Post-transcriptional regulator ComN (comN) of Bacillus subtilis (strain 168).